We begin with the raw amino-acid sequence, 367 residues long: tRNA-specific 2-thiouridylase MnmA (367 aa).

ATP contacts are provided by residues 13–20 (GLSGGVDS) and Met-39. The interval 99 to 101 (NPD) is interaction with target base in tRNA. Cys-104 acts as the Nucleophile in catalysis. Cys-104 and Cys-200 are disulfide-bonded. Position 128 (Gly-128) interacts with ATP. The segment at 150–152 (KDQ) is interaction with tRNA. The Cysteine persulfide intermediate role is filled by Cys-200. Positions 307–308 (RY) are interaction with tRNA.

It belongs to the MnmA/TRMU family.

Its subcellular location is the cytoplasm. It carries out the reaction S-sulfanyl-L-cysteinyl-[protein] + uridine(34) in tRNA + AH2 + ATP = 2-thiouridine(34) in tRNA + L-cysteinyl-[protein] + A + AMP + diphosphate + H(+). Functionally, catalyzes the 2-thiolation of uridine at the wobble position (U34) of tRNA, leading to the formation of s(2)U34. The protein is tRNA-specific 2-thiouridylase MnmA of Neisseria meningitidis serogroup C (strain 053442).